The sequence spans 450 residues: Probable malate:quinone oxidoreductase (450 aa).

Belongs to the MQO family. It depends on FAD as a cofactor.

The enzyme catalyses (S)-malate + a quinone = a quinol + oxaloacetate. Its pathway is carbohydrate metabolism; tricarboxylic acid cycle; oxaloacetate from (S)-malate (quinone route): step 1/1. The sequence is that of Probable malate:quinone oxidoreductase from Helicobacter acinonychis (strain Sheeba).